We begin with the raw amino-acid sequence, 453 residues long: Vitamin D3 receptor A (453 aa).

Positions 53–128 (PRICGVCGDK…IGMMKEFILT (76 aa)) form a DNA-binding region, nuclear receptor. The Zn(2+) site is built by Cys56, Cys59, Cys73, Cys76, Cys92, Cys98, Cys108, and Cys111. 2 NR C4-type zinc fingers span residues 56-76 (CGVCGDKATGFHFNAMTCEGC) and 92-111 (CPFNGNCTITKDNRRHCQAC). Positions 129 to 158 (DEEVQRKKDLIMKRKEEEAAREARKPRLSD) are hinge. The NR LBD domain occupies 159-449 (EQMQIINSLV…LTPLVLEVFG (291 aa)). Residues Tyr175 and Ser265 each coordinate calcitriol. The segment at 274-292 (KMIPGFRDLTAEDQIALLK) is interaction with coactivator LXXLL motif. Arg302, Ser306, His333, and His423 together coordinate calcitriol. The 9aaTAD signature appears at 442–450 (PLVLEVFGS).

This sequence belongs to the nuclear hormone receptor family. NR1 subfamily. In terms of assembly, homodimer in the absence of bound vitamin D3. Heterodimer with RXRA after vitamin D3 binding. Interacts with ncoa1 and possibly other coactivators, leading to a strong increase of transcription of target genes. Detected in embryo 24 to 48 hours after fertilization and in gastrula.

The protein localises to the nucleus. It localises to the cytoplasm. In terms of biological role, nuclear receptor for calcitriol, the active form of vitamin D3 which mediates the action of this vitamin on cells. Enters the nucleus upon vitamin D3 binding where it forms heterodimers with the retinoid X receptor/RXR. The VDR-RXR heterodimers bind to specific response elements on DNA and activate the transcription of vitamin D3-responsive target genes. Recruited to promoters via its interaction with BAZ1B/WSTF which mediates the interaction with acetylated histones, an essential step for VDR-promoter association. Plays a central role in calcium homeostasis. In Danio rerio (Zebrafish), this protein is Vitamin D3 receptor A (vdra).